The primary structure comprises 90 residues: Small ribosomal subunit protein bS18 (90 aa).

The protein belongs to the bacterial ribosomal protein bS18 family. As to quaternary structure, part of the 30S ribosomal subunit. Forms a tight heterodimer with protein bS6.

Functionally, binds as a heterodimer with protein bS6 to the central domain of the 16S rRNA, where it helps stabilize the platform of the 30S subunit. This chain is Small ribosomal subunit protein bS18, found in Porphyromonas gingivalis (strain ATCC 33277 / DSM 20709 / CIP 103683 / JCM 12257 / NCTC 11834 / 2561).